Here is a 434-residue protein sequence, read N- to C-terminus: Chaperone SurA (434 aa).

An N-terminal signal peptide occupies residues 1–22 (MKHSKKIIFALLALAMSNTSMA). PpiC domains are found at residues 173 to 274 (DVEF…KVVD) and 283 to 383 (VEEV…QLES).

The protein resides in the periplasm. It carries out the reaction [protein]-peptidylproline (omega=180) = [protein]-peptidylproline (omega=0). Chaperone involved in the correct folding and assembly of outer membrane proteins. Recognizes specific patterns of aromatic residues and the orientation of their side chains, which are found more frequently in integral outer membrane proteins. May act in both early periplasmic and late outer membrane-associated steps of protein maturation. This chain is Chaperone SurA, found in Shewanella frigidimarina (strain NCIMB 400).